The primary structure comprises 129 residues: Aspartate 1-decarboxylase (129 aa).

The active-site Schiff-base intermediate with substrate; via pyruvic acid is Ser25. Ser25 carries the pyruvic acid (Ser) modification. Position 57 (Thr57) interacts with substrate. Residue Tyr58 is the Proton donor of the active site. 73-75 (GAA) contributes to the substrate binding site.

The protein belongs to the PanD family. As to quaternary structure, heterooctamer of four alpha and four beta subunits. Pyruvate serves as cofactor. Post-translationally, is synthesized initially as an inactive proenzyme, which is activated by self-cleavage at a specific serine bond to produce a beta-subunit with a hydroxyl group at its C-terminus and an alpha-subunit with a pyruvoyl group at its N-terminus.

It is found in the cytoplasm. It catalyses the reaction L-aspartate + H(+) = beta-alanine + CO2. The protein operates within cofactor biosynthesis; (R)-pantothenate biosynthesis; beta-alanine from L-aspartate: step 1/1. Its function is as follows. Catalyzes the pyruvoyl-dependent decarboxylation of aspartate to produce beta-alanine. This is Aspartate 1-decarboxylase from Prosthecochloris aestuarii (strain DSM 271 / SK 413).